The chain runs to 407 residues: ATP-citrate synthase subunit alpha chain protein 1 (407 aa).

Citrate contacts are provided by Asn327, Thr329, and Arg360.

Belongs to the succinate/malate CoA ligase beta subunit family. Heterooctamer of 4 alpha and 4 beta chains.

Its subcellular location is the cytoplasm. It localises to the cytosol. It carries out the reaction oxaloacetate + acetyl-CoA + ADP + phosphate = citrate + ATP + CoA. Functionally, ATP citrate-lyase is the primary enzyme responsible for the synthesis of cytosolic acetyl-CoA, used for the elongation of fatty acids and biosynthesis of isoprenoids, flavonoids and malonated derivatives. May supply substrate to the cytosolic acetyl-CoA carboxylase, which generates the malonyl-CoA used for the synthesis of a multitude of compounds, including very long chain fatty acids and flavonoids. In contrast to all known animal ACL enzymes having a homomeric structure, plant ACLs are composed of alpha and beta chains. The sequence is that of ATP-citrate synthase subunit alpha chain protein 1 (ACLA-1) from Oryza sativa subsp. japonica (Rice).